A 374-amino-acid chain; its full sequence is N5-carboxyaminoimidazole ribonucleotide synthase (374 aa).

ATP-binding positions include Arg-108, Lys-148, 153–159 (GYDGKGQ), 183–186 (EKYL), Glu-191, His-214, and 266–267 (NE). Residues 112–296 (KETLKSAGTK…QFDTHILAVT (185 aa)) enclose the ATP-grasp domain.

The protein belongs to the PurK/PurT family. Homodimer.

It carries out the reaction 5-amino-1-(5-phospho-beta-D-ribosyl)imidazole + hydrogencarbonate + ATP = 5-carboxyamino-1-(5-phospho-D-ribosyl)imidazole + ADP + phosphate + 2 H(+). It functions in the pathway purine metabolism; IMP biosynthesis via de novo pathway; 5-amino-1-(5-phospho-D-ribosyl)imidazole-4-carboxylate from 5-amino-1-(5-phospho-D-ribosyl)imidazole (N5-CAIR route): step 1/2. In terms of biological role, catalyzes the ATP-dependent conversion of 5-aminoimidazole ribonucleotide (AIR) and HCO(3)(-) to N5-carboxyaminoimidazole ribonucleotide (N5-CAIR). The polypeptide is N5-carboxyaminoimidazole ribonucleotide synthase (Staphylococcus aureus (strain MSSA476)).